The following is a 441-amino-acid chain: Ribulose bisphosphate carboxylase large chain (441 aa).

Substrate contacts are provided by Asn89 and Thr139. The active-site Proton acceptor is Lys141. Lys143 serves as a coordination point for substrate. Mg(2+) is bound by residues Lys167, Asp169, and Glu170. An N6-carboxylysine modification is found at Lys167. His260 serves as the catalytic Proton acceptor. Positions 261, 293, and 345 each coordinate substrate.

Belongs to the RuBisCO large chain family. Type I subfamily. As to quaternary structure, heterohexadecamer of 8 large chains and 8 small chains; disulfide-linked. The disulfide link is formed within the large subunit homodimers. The cofactor is Mg(2+). In terms of processing, the disulfide bond which can form in the large chain dimeric partners within the hexadecamer appears to be associated with oxidative stress and protein turnover.

It is found in the plastid. Its subcellular location is the chloroplast. The enzyme catalyses 2 (2R)-3-phosphoglycerate + 2 H(+) = D-ribulose 1,5-bisphosphate + CO2 + H2O. It catalyses the reaction D-ribulose 1,5-bisphosphate + O2 = 2-phosphoglycolate + (2R)-3-phosphoglycerate + 2 H(+). In terms of biological role, ruBisCO catalyzes two reactions: the carboxylation of D-ribulose 1,5-bisphosphate, the primary event in carbon dioxide fixation, as well as the oxidative fragmentation of the pentose substrate in the photorespiration process. Both reactions occur simultaneously and in competition at the same active site. The protein is Ribulose bisphosphate carboxylase large chain of Apocynum cannabinum (Hemp dogbane).